Here is a 52-residue protein sequence, read N- to C-terminus: Large ribosomal subunit protein bL32c (52 aa).

It belongs to the bacterial ribosomal protein bL32 family.

Its subcellular location is the plastid. It is found in the chloroplast. The sequence is that of Large ribosomal subunit protein bL32c from Nymphaea alba (White water-lily).